We begin with the raw amino-acid sequence, 400 residues long: Elongation factor Tu (400 aa).

The tr-type G domain occupies 10 to 208; it reads KPHVNVGTIG…AMDNYIPDPQ (199 aa). The segment at 19–26 is G1; that stretch reads GHIDHGKS. 19–26 serves as a coordination point for GTP; sequence GHIDHGKS. Position 26 (Ser-26) interacts with Mg(2+). The tract at residues 60-64 is G2; it reads GITIN. A G3 region spans residues 81–84; sequence DCPG. GTP contacts are provided by residues 81 to 85 and 136 to 139; these read DCPGH and NKTD. The interval 136-139 is G4; it reads NKTD. Positions 174–176 are G5; that stretch reads SAL.

It belongs to the TRAFAC class translation factor GTPase superfamily. Classic translation factor GTPase family. EF-Tu/EF-1A subfamily. In terms of assembly, monomer.

It is found in the cytoplasm. It catalyses the reaction GTP + H2O = GDP + phosphate + H(+). Functionally, GTP hydrolase that promotes the GTP-dependent binding of aminoacyl-tRNA to the A-site of ribosomes during protein biosynthesis. The chain is Elongation factor Tu from Thermotoga neapolitana (strain ATCC 49049 / DSM 4359 / NBRC 107923 / NS-E).